Reading from the N-terminus, the 139-residue chain is Phosphoribosyl-AMP cyclohydrolase (139 aa).

D91 is a Mg(2+) binding site. C92 lines the Zn(2+) pocket. The Mg(2+) site is built by D93 and D95. Zn(2+) contacts are provided by C110 and C117.

It belongs to the PRA-CH family. In terms of assembly, homodimer. The cofactor is Mg(2+). Zn(2+) is required as a cofactor.

Its subcellular location is the cytoplasm. The enzyme catalyses 1-(5-phospho-beta-D-ribosyl)-5'-AMP + H2O = 1-(5-phospho-beta-D-ribosyl)-5-[(5-phospho-beta-D-ribosylamino)methylideneamino]imidazole-4-carboxamide. Its pathway is amino-acid biosynthesis; L-histidine biosynthesis; L-histidine from 5-phospho-alpha-D-ribose 1-diphosphate: step 3/9. Its function is as follows. Catalyzes the hydrolysis of the adenine ring of phosphoribosyl-AMP. This is Phosphoribosyl-AMP cyclohydrolase from Brucella canis (strain ATCC 23365 / NCTC 10854 / RM-666).